A 205-amino-acid chain; its full sequence is Large ribosomal subunit protein uL4 (205 aa).

Positions 56–78 (ISGTTAKPYRQKHTGRARQGSLR) are disordered.

The protein belongs to the universal ribosomal protein uL4 family. In terms of assembly, part of the 50S ribosomal subunit.

One of the primary rRNA binding proteins, this protein initially binds near the 5'-end of the 23S rRNA. It is important during the early stages of 50S assembly. It makes multiple contacts with different domains of the 23S rRNA in the assembled 50S subunit and ribosome. Functionally, forms part of the polypeptide exit tunnel. The chain is Large ribosomal subunit protein uL4 from Ehrlichia canis (strain Jake).